A 127-amino-acid polypeptide reads, in one-letter code: Cyclin-dependent protein kinase inhibitor SIM (127 aa).

The segment at 21–71 is disordered; the sequence is RANTNRDDDGGGCTTPTSSDHKIPPTTATTPPPPPQKPRPPSTPSSLGIRS. Pro residues predominate over residues 50 to 63; sequence TPPPPPQKPRPPST.

As to quaternary structure, interacts with CDKA-1. Interacts with CYCD2-1, CYCD3-2 and CYCD4-1. Interacts with CDKB1-1. Interacts with CPR5. In terms of tissue distribution, expressed in the shoot apical meristem, leaf primordia and the elongation zone of the root.

Its subcellular location is the nucleus. In terms of biological role, cyclin-dependent protein kinase (CDK) inhibitor that functions as a repressor of mitosis in the endoreduplication cell cycle. Inhibits the kinase activity of CYCD3-1/CDKA-1, CYCD2-1/CDKA-1 and CYCB1-1/CDKB1-1 complexes in a dose dependent manner. Cooperates with SMR1 and SMR2 to promote endoreplication during leaf development. Required for normal trichome endoreplicating cell cycles. Positive regulator of effector-triggered immunity (ETI). This Arabidopsis thaliana (Mouse-ear cress) protein is Cyclin-dependent protein kinase inhibitor SIM.